The primary structure comprises 283 residues: MFS-type transporter eupM (283 aa).

A run of 7 helical transmembrane segments spans residues 68–88 (LVAW…WGAM), 111–131 (IAWI…VAGP), 136–156 (GGFK…YMML), 165–185 (VLLA…TPMI), 196–216 (IGLA…VYPI), 227–247 (FAWT…IPII), and 263–283 (LIDL…ATMI).

This sequence belongs to the major facilitator superfamily. Monocarboxylate porter (TC 2.A.1.13) family.

Its subcellular location is the membrane. Functionally, MFS-type transporter; part of the gene cluster that mediates the biosynthesis of eupenifeldin, a bistropolone meroterpenoid that acts as an antitumor agent. In Phoma sp, this protein is MFS-type transporter eupM.